The following is a 20-amino-acid chain: 54 kDa cell wall protein (20 aa).

The segment at 1–20 (KVPVDDQFRRVNNGGATDTR) is disordered.

It localises to the secreted. The protein localises to the cell wall. This Arabidopsis thaliana (Mouse-ear cress) protein is 54 kDa cell wall protein.